The sequence spans 304 residues: Histone H1.8 (304 aa).

Low complexity predominate over residues 1 to 24 (MAPGSVSSVSSSSFPSRDTSPSGS). 3 disordered regions span residues 1–38 (MAPG…PSCR), 110–248 (SKAK…NSVA), and 270–304 (TVQE…NTQA). The H15 domain occupies 45–123 (RNPTMLHMVL…GATGSFKLVP (79 aa)). Residues 132–144 (APKAGRGAAGAKE) are compositionally biased toward low complexity. Basic and acidic residues-rich tracts occupy residues 153–166 (LKKD…MEKG), 189–202 (KPKE…KQDK), and 225–237 (ANAH…EKSK). The Nuclear localization signal motif lies at 154-170 (KKDQVGKATMEKGQKRR). The span at 270-281 (TVQETKVPTPSQ) shows a compositional bias: polar residues.

Belongs to the histone H1/H5 family. As to expression, oocyte-specific.

Its subcellular location is the cytoplasm. It is found in the nucleus. The protein localises to the chromosome. Its function is as follows. May play a key role in the control of gene expression during oogenesis and early embryogenesis, presumably through the perturbation of chromatin structure. Essential for meiotic maturation of germinal vesicle-stage oocytes. The somatic type linker histone H1c is rapidly replaced by H1oo in a donor nucleus transplanted into an oocyte. The greater mobility of H1oo as compared to H1c may contribute to this rapid replacement and increased instability of the embryonic chromatin structure. The rapid replacement of H1c with H1oo may play an important role in nuclear remodeling. This Mus musculus (Mouse) protein is Histone H1.8.